Here is a 586-residue protein sequence, read N- to C-terminus: Aspartate--tRNA(Asp/Asn) ligase (586 aa).

E172 is an L-aspartate binding site. Residues 196–199 form an aspartate region; that stretch reads QLYK. R218 is a binding site for L-aspartate. Residues 218 to 220 and Q227 each bind ATP; that span reads RDE. H446 provides a ligand contact to L-aspartate. Residue E480 participates in ATP binding. R487 contributes to the L-aspartate binding site. Position 532–535 (532–535) interacts with ATP; the sequence is GIDR.

This sequence belongs to the class-II aminoacyl-tRNA synthetase family. Type 1 subfamily. In terms of assembly, homodimer.

The protein localises to the cytoplasm. The enzyme catalyses tRNA(Asx) + L-aspartate + ATP = L-aspartyl-tRNA(Asx) + AMP + diphosphate. Functionally, aspartyl-tRNA synthetase with relaxed tRNA specificity since it is able to aspartylate not only its cognate tRNA(Asp) but also tRNA(Asn). Reaction proceeds in two steps: L-aspartate is first activated by ATP to form Asp-AMP and then transferred to the acceptor end of tRNA(Asp/Asn). The protein is Aspartate--tRNA(Asp/Asn) ligase of Borreliella afzelii (strain PKo) (Borrelia afzelii).